The sequence spans 396 residues: Gap junction gamma-1 protein (396 aa).

The Cytoplasmic segment spans residues 1 to 22 (MSWSFLTRLLEEIHNHSTFVGK). A helical transmembrane segment spans residues 23-45 (IWLTVLIVFRIVLTAVGGESIYY). The Extracellular portion of the chain corresponds to 46–75 (DEQSKFVCNTEQPGCENVCYDAFAPLSHVR). Residues 76–95 (FWVFQIILVATPSVMYLGYA) traverse the membrane as a helical segment. Residues 96 to 175 (IHKIAKMEHG…RRIREDGLMK (80 aa)) are Cytoplasmic-facing. Residues 145–165 (ELESEKENKEQNQSKPKHDGR) form a disordered region. A compositionally biased stretch (basic and acidic residues) spans 147 to 156 (ESEKENKEQN). The helical transmembrane segment at 176–198 (IYVLQLLARTMFEVGFLIGQYFL) threads the bilayer. The Extracellular segment spans residues 199–228 (YGFQVHPFYVCSRVPCPHKIDCFISRPTEK). The helical transmembrane segment at 229–248 (TIFLLIMYGVTGLCLLLNIW) threads the bilayer. At 249-396 (EMLHLGFGTI…SGDGKTSVWI (148 aa)) the chain is on the cytoplasmic side. A disordered region spans residues 357–396 (NHQNNPHGPREKKAKVGSKAGSNKSSASSKSGDGKTSVWI). Residues 373–396 (GSKAGSNKSSASSKSGDGKTSVWI) show a composition bias toward low complexity.

It belongs to the connexin family. Gamma-type subfamily. As to quaternary structure, a connexon is composed of a hexamer of connexins. Interacts with CNST.

The protein localises to the cell membrane. Its subcellular location is the cell junction. It is found in the gap junction. Functionally, one gap junction consists of a cluster of closely packed pairs of transmembrane channels, the connexons, through which materials of low MW diffuse from one cell to a neighboring cell. This Sus scrofa (Pig) protein is Gap junction gamma-1 protein (GJC1).